A 604-amino-acid chain; its full sequence is MKEKTPTPMKNIRNFSIIAHIDHGKSTLADCLIAECNAISNREMTSQVMDTMDIEKERGITIKAQSVRLNYTFKGEDYVLNLIDTPGHVDFSYEVSRSLCSCEGALLVVDATQGVEAQTIANTYIALDNNLEILPVINKIDLPNANVLEIKQDIEDTIGIDCSNANEVSAKAKLGIKDLLEKIITTIPAPSGDPNAPLKALIYDSWFDNYLGALALVRIMDGSINTEQEILVMGTGKKHGVLGLYYPNPLKKIPTKSLECGEIGIVSLGLKSVTDIAVGDTLTDAKNPTPKPIEGFMPAKPFVFAGLYPIETDRFEDLREALLKLQLNDCALNFEPESSVALGFGFRVGFLGLLHMEVIKERLEREFGLNLIATAPTVVYEVHLTDNSIKYVQNPSELPPENHIACIKEPFVRATIITPSEFLGNLMQLLNNKRGIQEKMEYLNQSRVMLTYSLPSNEIVMDFYDKLKSCTKGYASFDYEPIENREAHLVKLDVRVAGDVVDALSIIIDKNKAYEKGRALVETMKELIPRQLFEVAIQASVGNKIIARETIKSVGKNVTAKCYGGDITRKRKLLEKQKEGKKRMKAIGKVELPQEAFLAILKID.

Positions lysine 10 to serine 191 constitute a tr-type G domain. GTP contacts are provided by residues aspartate 22–threonine 27 and asparagine 138–aspartate 141.

Belongs to the TRAFAC class translation factor GTPase superfamily. Classic translation factor GTPase family. LepA subfamily.

Its subcellular location is the cell inner membrane. It carries out the reaction GTP + H2O = GDP + phosphate + H(+). Its function is as follows. Required for accurate and efficient protein synthesis under certain stress conditions. May act as a fidelity factor of the translation reaction, by catalyzing a one-codon backward translocation of tRNAs on improperly translocated ribosomes. Back-translocation proceeds from a post-translocation (POST) complex to a pre-translocation (PRE) complex, thus giving elongation factor G a second chance to translocate the tRNAs correctly. Binds to ribosomes in a GTP-dependent manner. The protein is Elongation factor 4 of Helicobacter pylori (strain P12).